Consider the following 302-residue polypeptide: Sulfate adenylyltransferase subunit 2 (302 aa).

Belongs to the PAPS reductase family. CysD subfamily. In terms of assembly, heterodimer composed of CysD, the smaller subunit, and CysN.

The catalysed reaction is sulfate + ATP + H(+) = adenosine 5'-phosphosulfate + diphosphate. It functions in the pathway sulfur metabolism; hydrogen sulfide biosynthesis; sulfite from sulfate: step 1/3. In terms of biological role, with CysN forms the ATP sulfurylase (ATPS) that catalyzes the adenylation of sulfate producing adenosine 5'-phosphosulfate (APS) and diphosphate, the first enzymatic step in sulfur assimilation pathway. APS synthesis involves the formation of a high-energy phosphoric-sulfuric acid anhydride bond driven by GTP hydrolysis by CysN coupled to ATP hydrolysis by CysD. The protein is Sulfate adenylyltransferase subunit 2 of Salmonella agona (strain SL483).